We begin with the raw amino-acid sequence, 758 residues long: 5-methyltetrahydropteroyltriglutamate--homocysteine methyltransferase (758 aa).

5-methyltetrahydropteroyltri-L-glutamate is bound by residues 17–20 (RELK) and Lys-117. L-homocysteine contacts are provided by residues 434 to 436 (IGS) and Glu-487. L-methionine contacts are provided by residues 434–436 (IGS) and Glu-487. 5-methyltetrahydropteroyltri-L-glutamate contacts are provided by residues 518-519 (RC) and Trp-564. Position 602 (Asp-602) interacts with L-homocysteine. Position 602 (Asp-602) interacts with L-methionine. Glu-608 is a binding site for 5-methyltetrahydropteroyltri-L-glutamate. Zn(2+) is bound by residues His-644, Cys-646, and Glu-668. The active-site Proton donor is His-697. A Zn(2+)-binding site is contributed by Cys-729.

The protein belongs to the vitamin-B12 independent methionine synthase family. It depends on Zn(2+) as a cofactor.

The enzyme catalyses 5-methyltetrahydropteroyltri-L-glutamate + L-homocysteine = tetrahydropteroyltri-L-glutamate + L-methionine. The protein operates within amino-acid biosynthesis; L-methionine biosynthesis via de novo pathway; L-methionine from L-homocysteine (MetE route): step 1/1. Functionally, catalyzes the transfer of a methyl group from 5-methyltetrahydrofolate to homocysteine resulting in methionine formation. The protein is 5-methyltetrahydropteroyltriglutamate--homocysteine methyltransferase of Yersinia pestis bv. Antiqua (strain Antiqua).